Consider the following 89-residue polypeptide: ATP synthase subunit H, mitochondrial (89 aa).

In terms of assembly, F-type ATP synthases have 2 components, the catalytic core F(1) and the membrane-embedded component F(0), linked together by a central stalk and a peripheral stalk. The central stalk, also called rotor shaft, is often seen as part of F(1). The peripheral stalk is seen as part of F(0). F(0) contains the membrane channel next to the rotor. F-type ATP synthases form dimers but each monomer functions independently in ATP generation. The dimer consists of 18 different polypeptides: ATP1 (subunit alpha, part of F(1), 3 molecules per monomer), ATP2 (subunit beta, part of F(1), 3 molecules per monomer), ATP3 (subunit gamma, part of the central stalk), ATP4 (subunit b, part of the peripheral stalk), ATP5/OSCP (subunit 5/OSCP, part of the peripheral stalk), ATP6 (subunit a, part of the peripheral stalk), ATP7 (subunit d, part of the peripheral stalk), ATP8 (subunit 8, part of the peripheral stalk), OLI1 (subunit c, part of the rotor, 10 molecules per monomer), ATP14 (subunit H, part of the peripheral stalk), ATP15 (subunit epsilon, part of the central stalk), ATP16 (subunit delta, part of the central stalk), ATP17 (subunit f, part of the peripheral stalk), ATP18 (subunit i/j, part of the peripheral stalk). Dimer-specific subunits are ATP19 (subunit k, at interface between monomers), ATP20 (subunit g, at interface between monomers), TIM11 (subunit e, at interface between monomers). Also contains subunit L.

The protein localises to the mitochondrion inner membrane. In terms of biological role, mitochondrial membrane ATP synthase (F(1)F(0) ATP synthase or Complex V) produces ATP from ADP in the presence of a proton gradient across the membrane which is generated by electron transport complexes of the respiratory chain. F-type ATP synthases consist of two structural domains, F(1) - containing the extramembraneous catalytic core, and F(0) - containing the membrane proton channel, linked together by a central stalk and a peripheral stalk. During catalysis, ATP synthesis in the catalytic domain of F(1) is coupled via a rotary mechanism of the central stalk subunits to proton translocation. Part of the peripheral stalk. The polypeptide is ATP synthase subunit H, mitochondrial (Pichia angusta (Yeast)).